We begin with the raw amino-acid sequence, 160 residues long: NADH-quinone oxidoreductase subunit B (160 aa).

[4Fe-4S] cluster is bound by residues Cys37, Cys38, Cys102, and Cys132.

It belongs to the complex I 20 kDa subunit family. NDH-1 is composed of 14 different subunits. Subunits NuoB, C, D, E, F, and G constitute the peripheral sector of the complex. Requires [4Fe-4S] cluster as cofactor.

The protein localises to the cell inner membrane. It catalyses the reaction a quinone + NADH + 5 H(+)(in) = a quinol + NAD(+) + 4 H(+)(out). NDH-1 shuttles electrons from NADH, via FMN and iron-sulfur (Fe-S) centers, to quinones in the respiratory chain. Couples the redox reaction to proton translocation (for every two electrons transferred, four hydrogen ions are translocated across the cytoplasmic membrane), and thus conserves the redox energy in a proton gradient. This is NADH-quinone oxidoreductase subunit B from Cupriavidus metallidurans (strain ATCC 43123 / DSM 2839 / NBRC 102507 / CH34) (Ralstonia metallidurans).